The chain runs to 272 residues: uncharacterized protein (272 aa).

In terms of domain architecture, HTH merR-type spans 1–27 (MDTLAFINRALVEEGYSLKDIKLVLIT).

This is an uncharacterized protein from Aquifex aeolicus (strain VF5).